The chain runs to 451 residues: Chromosomal replication initiator protein DnaA (451 aa).

The tract at residues 1–94 (MKPDLSSLWQ…KPEPKPAQPS (94 aa)) is domain I, interacts with DnaA modulators. Residues 87-106 (EPKPAQPSALPTHHNKEENK) are disordered. The tract at residues 95–113 (ALPTHHNKEENKPQTVIRS) is domain II. The segment at 114 to 331 (YLNPKHVFEN…GALNRVSANA (218 aa)) is domain III, AAA+ region. ATP contacts are provided by Gly159, Gly161, Lys162, and Thr163. Residues 332–451 (EFMGAAITID…WSNLIRTLSV (120 aa)) are domain IV, binds dsDNA.

The protein belongs to the DnaA family. Oligomerizes as a right-handed, spiral filament on DNA at oriC.

Its subcellular location is the cytoplasm. Functionally, plays an essential role in the initiation and regulation of chromosomal replication. ATP-DnaA binds to the origin of replication (oriC) to initiate formation of the DNA replication initiation complex once per cell cycle. Binds the DnaA box (a 9 base pair repeat at the origin) and separates the double-stranded (ds)DNA. Forms a right-handed helical filament on oriC DNA; dsDNA binds to the exterior of the filament while single-stranded (ss)DNA is stabiized in the filament's interior. The ATP-DnaA-oriC complex binds and stabilizes one strand of the AT-rich DNA unwinding element (DUE), permitting loading of DNA polymerase. After initiation quickly degrades to an ADP-DnaA complex that is not apt for DNA replication. Binds acidic phospholipids. This is Chromosomal replication initiator protein DnaA from Pasteurella multocida (strain Pm70).